A 369-amino-acid chain; its full sequence is Queuine tRNA-ribosyltransferase (369 aa).

D90 acts as the Proton acceptor in catalysis. Substrate is bound by residues 90-94, D144, Q186, and G213; that span reads DSGGF. An RNA binding region spans residues 244–250; the sequence is GVGKPAD. The Nucleophile role is filled by D263. Zn(2+)-binding residues include C301, C303, C306, and H332.

This sequence belongs to the queuine tRNA-ribosyltransferase family. As to quaternary structure, homodimer. Within each dimer, one monomer is responsible for RNA recognition and catalysis, while the other monomer binds to the replacement base PreQ1. It depends on Zn(2+) as a cofactor.

The enzyme catalyses 7-aminomethyl-7-carbaguanine + guanosine(34) in tRNA = 7-aminomethyl-7-carbaguanosine(34) in tRNA + guanine. It participates in tRNA modification; tRNA-queuosine biosynthesis. In terms of biological role, catalyzes the base-exchange of a guanine (G) residue with the queuine precursor 7-aminomethyl-7-deazaguanine (PreQ1) at position 34 (anticodon wobble position) in tRNAs with GU(N) anticodons (tRNA-Asp, -Asn, -His and -Tyr). Catalysis occurs through a double-displacement mechanism. The nucleophile active site attacks the C1' of nucleotide 34 to detach the guanine base from the RNA, forming a covalent enzyme-RNA intermediate. The proton acceptor active site deprotonates the incoming PreQ1, allowing a nucleophilic attack on the C1' of the ribose to form the product. After dissociation, two additional enzymatic reactions on the tRNA convert PreQ1 to queuine (Q), resulting in the hypermodified nucleoside queuosine (7-(((4,5-cis-dihydroxy-2-cyclopenten-1-yl)amino)methyl)-7-deazaguanosine). This Dichelobacter nodosus (strain VCS1703A) protein is Queuine tRNA-ribosyltransferase.